The sequence spans 129 residues: Small ribosomal subunit protein uS11 (129 aa).

Belongs to the universal ribosomal protein uS11 family. As to quaternary structure, part of the 30S ribosomal subunit. Interacts with proteins S7 and S18. Binds to IF-3.

Functionally, located on the platform of the 30S subunit, it bridges several disparate RNA helices of the 16S rRNA. Forms part of the Shine-Dalgarno cleft in the 70S ribosome. In Symbiobacterium thermophilum (strain DSM 24528 / JCM 14929 / IAM 14863 / T), this protein is Small ribosomal subunit protein uS11.